A 238-amino-acid polypeptide reads, in one-letter code: Cysteine-rich venom protein pseudecin (238 aa).

An N-terminal signal peptide occupies residues 1-19 (MIAFIVLLSLAAVLQQSSG). Positions 20 to 28 (TVDFASESS) are excised as a propeptide. The 127-residue stretch at 38 to 164 (VDKHNALRRS…SSKYLYVCQY (127 aa)) folds into the SCP domain. Zn(2+)-binding residues include threonine 51 and serine 106. Intrachain disulfides connect cysteine 75–cysteine 153, cysteine 92–cysteine 165, cysteine 148–cysteine 162, cysteine 184–cysteine 191, cysteine 187–cysteine 196, cysteine 200–cysteine 233, cysteine 209–cysteine 227, and cysteine 218–cysteine 231. The ShKT domain occupies 200-233 (CNYNNDFSNCKSLAKKSKCQTEWIKKKCPASCFC).

As to expression, expressed by the venom gland.

It localises to the secreted. Blocks olfactory (CNGA2) and retinal (CNGA1) CNG channel currents. Is really less potent that Pseudechetoxin. Does not affect neither depolarization- nor caffeine-induced contraction of smooth muscle. The polypeptide is Cysteine-rich venom protein pseudecin (Pseudechis porphyriacus (Red-bellied black snake)).